We begin with the raw amino-acid sequence, 312 residues long: MPGIAYLGPEGTFTEAALRALQAHGLIPSTAPDAAGADEVTPIAADSTSAALAAVRSGDADFACVPIENSIDGSVIPTLDSLADGAALQIYAELTLDVSFTIAVRPGTAAADVRTVAAYPVAAAQVRRWLAAHLPEAEVVPANSNAAAAQDVAAGRADAGVSTALATQRYGLEALAADVVDEPNARTRFVLVGRPGPPPKCTGADRTSVVLQLDNVPGALVSAMTELAVRDIDLTRIESRPTRTGLGTYKFFLDFVGHIEDPPVAEALRALHRRCADVRYLGSWPTGDVVGAAPPPMDESASWLEGLREGRP.

The 192-residue stretch at 3–194 (GIAYLGPEGT…ARTRFVLVGR (192 aa)) folds into the Prephenate dehydratase domain. In terms of domain architecture, ACT spans 208–285 (SVVLQLDNVP…ADVRYLGSWP (78 aa)). The tract at residues 291 to 312 (GAAPPPMDESASWLEGLREGRP) is disordered.

Homodimer.

It catalyses the reaction prephenate + H(+) = 3-phenylpyruvate + CO2 + H2O. It functions in the pathway amino-acid biosynthesis; L-phenylalanine biosynthesis; phenylpyruvate from prephenate: step 1/1. This Mycolicibacterium vanbaalenii (strain DSM 7251 / JCM 13017 / BCRC 16820 / KCTC 9966 / NRRL B-24157 / PYR-1) (Mycobacterium vanbaalenii) protein is Prephenate dehydratase (pheA).